The primary structure comprises 296 residues: N-acetylmuramic acid 6-phosphate etherase (296 aa).

The SIS domain occupies 54–217 (VIASFQQGGR…STTAMVGIGK (164 aa)). E82 serves as the catalytic Proton donor. The active site involves E113.

Belongs to the GCKR-like family. MurNAc-6-P etherase subfamily. As to quaternary structure, homodimer.

It carries out the reaction N-acetyl-D-muramate 6-phosphate + H2O = N-acetyl-D-glucosamine 6-phosphate + (R)-lactate. The protein operates within amino-sugar metabolism; N-acetylmuramate degradation. In terms of biological role, specifically catalyzes the cleavage of the D-lactyl ether substituent of MurNAc 6-phosphate, producing GlcNAc 6-phosphate and D-lactate. This chain is N-acetylmuramic acid 6-phosphate etherase, found in Shouchella clausii (strain KSM-K16) (Alkalihalobacillus clausii).